The following is a 133-amino-acid chain: Small ribosomal subunit protein uS8 (133 aa).

It belongs to the universal ribosomal protein uS8 family. In terms of assembly, part of the 30S ribosomal subunit. Contacts proteins S5 and S12.

In terms of biological role, one of the primary rRNA binding proteins, it binds directly to 16S rRNA central domain where it helps coordinate assembly of the platform of the 30S subunit. In Crocosphaera subtropica (strain ATCC 51142 / BH68) (Cyanothece sp. (strain ATCC 51142)), this protein is Small ribosomal subunit protein uS8.